We begin with the raw amino-acid sequence, 205 residues long: High frequency lysogenization protein HflD homolog (205 aa).

It belongs to the HflD family.

The protein localises to the cytoplasm. The protein resides in the cell inner membrane. The chain is High frequency lysogenization protein HflD homolog from Vibrio parahaemolyticus serotype O3:K6 (strain RIMD 2210633).